The following is an 87-amino-acid chain: MATSTNGIIDPPIDDLLSKVESKYALVIFASKRARQINDYYADLHEGSLFDNVGPLVDSSVDDKPLSVAMHEINEDRLVLKPIAAAE.

It belongs to the RNA polymerase subunit omega family. In terms of assembly, the RNAP catalytic core consists of 2 alpha, 1 beta, 1 beta' and 1 omega subunit. When a sigma factor is associated with the core the holoenzyme is formed, which can initiate transcription.

The enzyme catalyses RNA(n) + a ribonucleoside 5'-triphosphate = RNA(n+1) + diphosphate. In terms of biological role, promotes RNA polymerase assembly. Latches the N- and C-terminal regions of the beta' subunit thereby facilitating its interaction with the beta and alpha subunits. The protein is DNA-directed RNA polymerase subunit omega of Leifsonia xyli subsp. xyli (strain CTCB07).